Here is a 367-residue protein sequence, read N- to C-terminus: Flagellar P-ring protein (367 aa).

The first 22 residues, 1–22, serve as a signal peptide directing secretion; sequence MRRMLVIRWILAIHLIATQVFA.

Belongs to the FlgI family. The basal body constitutes a major portion of the flagellar organelle and consists of four rings (L,P,S, and M) mounted on a central rod.

It localises to the periplasm. The protein localises to the bacterial flagellum basal body. Its function is as follows. Assembles around the rod to form the L-ring and probably protects the motor/basal body from shearing forces during rotation. The chain is Flagellar P-ring protein from Legionella pneumophila (strain Corby).